A 195-amino-acid chain; its full sequence is Small ribosomal subunit protein uS4c (195 aa).

Residues 82–143 enclose the S4 RNA-binding domain; it reads MRLDNILFRL…KQRSKALIQN (62 aa).

It belongs to the universal ribosomal protein uS4 family. Part of the 30S ribosomal subunit. Contacts protein S5. The interaction surface between S4 and S5 is involved in control of translational fidelity.

It is found in the plastid. Its subcellular location is the chloroplast. In terms of biological role, one of the primary rRNA binding proteins, it binds directly to 16S rRNA where it nucleates assembly of the body of the 30S subunit. Functionally, with S5 and S12 plays an important role in translational accuracy. The sequence is that of Small ribosomal subunit protein uS4c (rps4) from Watsonia angusta.